Consider the following 232-residue polypeptide: 2-C-methyl-D-erythritol 4-phosphate cytidylyltransferase (232 aa).

It belongs to the IspD/TarI cytidylyltransferase family. IspD subfamily.

It catalyses the reaction 2-C-methyl-D-erythritol 4-phosphate + CTP + H(+) = 4-CDP-2-C-methyl-D-erythritol + diphosphate. The protein operates within isoprenoid biosynthesis; isopentenyl diphosphate biosynthesis via DXP pathway; isopentenyl diphosphate from 1-deoxy-D-xylulose 5-phosphate: step 2/6. Catalyzes the formation of 4-diphosphocytidyl-2-C-methyl-D-erythritol from CTP and 2-C-methyl-D-erythritol 4-phosphate (MEP). This Bacillus velezensis (strain DSM 23117 / BGSC 10A6 / LMG 26770 / FZB42) (Bacillus amyloliquefaciens subsp. plantarum) protein is 2-C-methyl-D-erythritol 4-phosphate cytidylyltransferase.